We begin with the raw amino-acid sequence, 1438 residues long: Membrane-anchored lipid-binding protein YSP2 (1438 aa).

Positions 1–17 (MRDEATRKKRSFSDGHF) are enriched in basic and acidic residues. Disordered stretches follow at residues 1 to 97 (MRDE…SHTP), 174 to 194 (KVKH…NERP), 200 to 219 (QKDD…SAPN), 285 to 308 (QQQH…QNPN), 338 to 418 (TSGP…KVKF), 455 to 485 (DENN…LGPK), and 505 to 543 (SQSN…RYSS). At 1–1277 (MRDEATRKKR…SAFSMLQQVN (1277 aa)) the chain is on the cytoplasmic side. S13 carries the phosphoserine modification. Residues 18–29 (FKKLKLMSRKKQ) show a composition bias toward basic residues. Over residues 30 to 44 (PVMERSKTTRTRKES) the composition is skewed to basic and acidic residues. Residues 45–58 (TNSAAKSSLSLRRA) are compositionally biased toward low complexity. The segment covering 74–97 (IGSTNEGVAGNSGSNSPAQYSHTP) has biased composition (polar residues). 2 stretches are compositionally biased toward low complexity: residues 286 to 298 (QQHP…GPLP) and 374 to 398 (PTNT…ANSN). S411 is subject to Phosphoserine. Over residues 455-470 (DENNTNNNPNASSTNL) the composition is skewed to low complexity. Residues 471–485 (SHISKSNVNNNLGPK) are compositionally biased toward polar residues. S596 is subject to Phosphoserine. One can recognise a GRAM domain in the interval 648–716 (EFHTLFKDCD…KEIVQIEKKT (69 aa)). Positions 777–843 (SSSAFFDDSD…LGPNKHSPTT (67 aa)) are disordered. The segment covering 783 to 800 (DDSDDNDDDGDLDDDDPD) has biased composition (acidic residues). Residues 818-832 (NESNDLGKNQKSTNY) show a composition bias toward polar residues. The region spanning 851–1018 (NDHLVIEANI…EIKKILSDED (168 aa)) is the VASt 1 domain. S1032 is subject to Phosphoserine. The VASt 2 domain maps to 1059-1225 (DDTVIDEKIN…DLKKIISNAS (167 aa)). The tract at residues 1225-1257 (SSTKKKSRRRGKTVNKRKSSPSTIKNEKNEENF) is disordered. Over residues 1227–1243 (TKKKSRRRGKTVNKRKS) the composition is skewed to basic residues. Residues 1278–1298 (ITSVQGIMTIISFFICLIFFF) traverse the membrane as a helical segment. The Lumenal portion of the chain corresponds to 1299-1438 (RLLFHSKNTS…DNTSATNQLL (140 aa)). 3 N-linked (GlcNAc...) asparagine glycosylation sites follow: N1306, N1373, and N1430.

The protein belongs to the YSP2 family.

It localises to the mitochondrion membrane. The protein localises to the endoplasmic reticulum membrane. Involved in induction of programmed cell death in response to reactive oxygen species (ROS). May be involved in sterol transfer between intracellular membranes. This is Membrane-anchored lipid-binding protein YSP2 from Saccharomyces cerevisiae (strain ATCC 204508 / S288c) (Baker's yeast).